The chain runs to 740 residues: MEACNCFEPQWPADDLLMKYQYISDFFIAVAYFSIPLELIYFVKKSAVFPYKWVLVQFGAFIVLCGATHLINLWTFNLHTRTVEIVMTTAKLMTAAVSCVTALMLVHIIPDLLSVKTRELFLKNKAAELDREMGLIRTQEETGRHVRMLTHEIRSTLDRHTILKTTLVELGRTLGLEECALWMPTRTGLELQLSHTLRQQNPVGYTVPIHLPVLNQVFSSNRAIKISPNSPIARLRPLAGKYVPGEVVAVRVPLLHLSNFQINDWPELSTKRYAMMVLMLPSDSARQWHVHELELVEVVADQVAVALSHAAILEESMRARDLLMEQNVALDMARREAETAIRARNDFLAVMNHEMRTPMHAIIALSSLLQETDLTSEQRLMVETILKSSNLLATLINDVLDLSRLEDGSLQLDIATFNLHAVFRQVFNLIKPIASVKKLFITLNVSPDLPEYVIGDEKRLVQIMLNVVGNAVKFSKEGIISVTAFVAKSESVRDPRAPDFFPVSSDNQFYMRVQVKDSGSGINPQDMPKLFTKFAQSQPVATKNSGGSGLGLAISKRFVNLMDGHIWIDSEGPSKGCTVTFVVKLGIPEGSNEPKLPLMPKVSANNSQTDFPGLKVLLMDENGISRMVTKGLLMHLGCDVTSVSSSEECLRMVSQDHKVVFMDVRVPGLDGHELAVRIHEKFMKRHERPLIVALTSNADKVTKENCLRVGMEGVILKPVSVDKMRNVLSKLLEHRILFEA.

3 consecutive transmembrane segments (helical) span residues 23 to 43 (ISDFFIAVAYFSIPLELIYFV), 53 to 73 (WVLVQFGAFIVLCGATHLINL), and 95 to 115 (AAVSCVTALMLVHIIPDLLSV). Positions 65 and 69 each coordinate Cu cation. The GAF domain occupies 158–307 (DRHTILKTTL…VVADQVAVAL (150 aa)). The Histidine kinase domain occupies 350–587 (VMNHEMRTPM…TVTFVVKLGI (238 aa)). At His-353 the chain carries Phosphohistidine; by autocatalysis. Residues 615–732 (KVLLMDENGI…KMRNVLSKLL (118 aa)) enclose the Response regulatory domain. Asp-663 is subject to 4-aspartylphosphate.

The protein belongs to the ethylene receptor family. Homodimer; disulfide-linked. Cu cation serves as cofactor. In terms of processing, activation probably requires a transfer of a phosphate group between a His in the transmitter domain and an Asp of the receiver domain.

It is found in the endoplasmic reticulum membrane. The catalysed reaction is ATP + protein L-histidine = ADP + protein N-phospho-L-histidine.. Its function is as follows. May act early in the ethylene signal transduction pathway, possibly as an ethylene receptor, or as a regulator of the pathway. In Pelargonium hortorum (Common geranium), this protein is Ethylene receptor 1 (ETR1).